Consider the following 476-residue polypeptide: Glycogen synthase (476 aa).

ADP-alpha-D-glucose is bound at residue K15.

It belongs to the glycosyltransferase 1 family. Bacterial/plant glycogen synthase subfamily.

The catalysed reaction is [(1-&gt;4)-alpha-D-glucosyl](n) + ADP-alpha-D-glucose = [(1-&gt;4)-alpha-D-glucosyl](n+1) + ADP + H(+). Its pathway is glycan biosynthesis; glycogen biosynthesis. Functionally, synthesizes alpha-1,4-glucan chains using ADP-glucose. The sequence is that of Glycogen synthase from Bacillus anthracis.